The chain runs to 450 residues: Phosphoglucosamine mutase (450 aa).

The Phosphoserine intermediate role is filled by Ser103. Ser103, Asp243, Asp245, and Asp247 together coordinate Mg(2+). The residue at position 103 (Ser103) is a Phosphoserine.

This sequence belongs to the phosphohexose mutase family. Requires Mg(2+) as cofactor. In terms of processing, activated by phosphorylation.

It carries out the reaction alpha-D-glucosamine 1-phosphate = D-glucosamine 6-phosphate. In terms of biological role, catalyzes the conversion of glucosamine-6-phosphate to glucosamine-1-phosphate. The polypeptide is Phosphoglucosamine mutase (Lactobacillus delbrueckii subsp. bulgaricus (strain ATCC BAA-365 / Lb-18)).